Reading from the N-terminus, the 347-residue chain is Dihydroorotate dehydrogenase (quinone) (347 aa).

FMN-binding positions include 62 to 66 and Thr-86; that span reads AGLDK. A substrate-binding site is contributed by Lys-66. 111–115 serves as a coordination point for substrate; that stretch reads NRMGF. FMN contacts are provided by Asn-142 and Asn-175. Asn-175 contributes to the substrate binding site. Ser-178 acts as the Nucleophile in catalysis. Residue Asn-180 participates in substrate binding. Lys-220 and Thr-248 together coordinate FMN. 249–250 provides a ligand contact to substrate; that stretch reads NT. Residues Gly-271, Gly-300, and 321 to 322 each bind FMN; that span reads YS.

Belongs to the dihydroorotate dehydrogenase family. Type 2 subfamily. Monomer. FMN serves as cofactor.

Its subcellular location is the cell membrane. The enzyme catalyses (S)-dihydroorotate + a quinone = orotate + a quinol. The protein operates within pyrimidine metabolism; UMP biosynthesis via de novo pathway; orotate from (S)-dihydroorotate (quinone route): step 1/1. Functionally, catalyzes the conversion of dihydroorotate to orotate with quinone as electron acceptor. This is Dihydroorotate dehydrogenase (quinone) from Dechloromonas aromatica (strain RCB).